Here is a 209-residue protein sequence, read N- to C-terminus: Glutathione S-transferase 1, isoform C (209 aa).

The GST N-terminal domain occupies 1–80 (MDFYYLPGSA…YLAEKYGKDD (80 aa)). Residues serine 9, 50 to 52 (HCI), and 64 to 66 (ESR) contribute to the glutathione site. The region spanning 86–207 (DPQKRAVVNQ…AGIEEFKKYF (122 aa)) is the GST C-terminal domain.

Belongs to the GST superfamily. Theta family. As to quaternary structure, homodimer.

The enzyme catalyses RX + glutathione = an S-substituted glutathione + a halide anion + H(+). It carries out the reaction 1,1,1-trichloro-2,2-bis(4-chlorophenyl)ethane = 1,1-dichloro-2,2-bis(4-chlorophenyl)ethylene + chloride + H(+). Conjugation of reduced glutathione to a wide number of exogenous and endogenous hydrophobic electrophiles. Has DDT dehydrochlorinase activity. This Anopheles gambiae (African malaria mosquito) protein is Glutathione S-transferase 1, isoform C (GstD1).